We begin with the raw amino-acid sequence, 761 residues long: Ribonucleoside-diphosphate reductase 1 subunit alpha (761 aa).

One can recognise an ATP-cone domain in the interval 5–95 (LLVTKRDGST…IFHLRKKAYG (91 aa)). ATP-binding positions include Lys-9, 15–21 (ERINLDK), Thr-55, and Lys-91. Thr-209 contacts GDP. An intrachain disulfide couples Cys-225 to Cys-462. DTTP-binding positions include 232–234 (DSL), Arg-262, and Arg-269. Lys-283 carries the post-translational modification N6-acetyllysine. Asn-437 contributes to the GDP binding site. Asn-437 acts as the Proton acceptor in catalysis. Cys-439 serves as the catalytic Cysteine radical intermediate. Residues Glu-441 and 623–625 (ETS) contribute to the GDP site. Catalysis depends on Glu-441, which acts as the Proton acceptor.

It belongs to the ribonucleoside diphosphate reductase large chain family. As to quaternary structure, tetramer of two alpha (R1) and two beta (R2) subunits. The B1 protein is a dimer of alpha subunits. A radical transfer pathway occurs between 'Tyr-122' of R2 and R1. Post-translationally, binding of the substrate occurs primarily when the active-site cysteines are reduced.

It carries out the reaction a 2'-deoxyribonucleoside 5'-diphosphate + [thioredoxin]-disulfide + H2O = a ribonucleoside 5'-diphosphate + [thioredoxin]-dithiol. Its activity is regulated as follows. Under complex allosteric control mediated by deoxynucleoside triphosphates and ATP binding to separate specificity and activation sites on the alpha subunit. The type of nucleotide bound at the specificity site determines substrate preference. It seems probable that ATP makes the enzyme reduce CDP and UDP, dGTP favors ADP reduction and dTTP favors GDP reduction. Stimulated by ATP and inhibited by dATP binding to the activity site. In vitro, its activity is increased by dithiothreitol (DTT) or thioredoxins (non-specific). Inhibited by hydroxyurea, leads to dNTP depletion, replication fork arrest and genomic instability. In terms of biological role, provides the precursors necessary for DNA synthesis. Catalyzes the biosynthesis of deoxyribonucleotides from the corresponding ribonucleotides. R1 contains the binding sites for both substrates and allosteric effectors and carries out the actual reduction of the ribonucleotide. It also provides redox-active cysteines. This Escherichia coli (strain K12) protein is Ribonucleoside-diphosphate reductase 1 subunit alpha (nrdA).